The sequence spans 312 residues: uncharacterized protein (312 aa).

Belongs to the asfivirus CP312R family.

The protein localises to the virion. This is an uncharacterized protein from African swine fever virus (isolate Tick/South Africa/Pretoriuskop Pr4/1996) (ASFV).